The chain runs to 487 residues: ATP synthase subunit beta (487 aa).

Residue 164–171 (GGAGVGKT) coordinates ATP.

It belongs to the ATPase alpha/beta chains family. F-type ATPases have 2 components, CF(1) - the catalytic core - and CF(0) - the membrane proton channel. CF(1) has five subunits: alpha(3), beta(3), gamma(1), delta(1), epsilon(1). CF(0) has four main subunits: a(1), b(1), b'(1) and c(9-12).

It is found in the cellular thylakoid membrane. The catalysed reaction is ATP + H2O + 4 H(+)(in) = ADP + phosphate + 5 H(+)(out). Produces ATP from ADP in the presence of a proton gradient across the membrane. The catalytic sites are hosted primarily by the beta subunits. The chain is ATP synthase subunit beta from Synechococcus sp. (strain CC9605).